A 116-amino-acid chain; its full sequence is Urease subunit beta (116 aa).

The disordered stretch occupies residues Ile97 to Pro116.

Belongs to the urease beta subunit family. As to quaternary structure, heterotrimer of UreA (gamma), UreB (beta) and UreC (alpha) subunits. Three heterotrimers associate to form the active enzyme.

Its subcellular location is the cytoplasm. It carries out the reaction urea + 2 H2O + H(+) = hydrogencarbonate + 2 NH4(+). It participates in nitrogen metabolism; urea degradation; CO(2) and NH(3) from urea (urease route): step 1/1. This Paracidovorax citrulli (strain AAC00-1) (Acidovorax citrulli) protein is Urease subunit beta.